A 91-amino-acid chain; its full sequence is Small ribosomal subunit protein uS15 (91 aa).

Belongs to the universal ribosomal protein uS15 family. In terms of assembly, part of the 30S ribosomal subunit. Forms a bridge to the 50S subunit in the 70S ribosome, contacting the 23S rRNA.

In terms of biological role, one of the primary rRNA binding proteins, it binds directly to 16S rRNA where it helps nucleate assembly of the platform of the 30S subunit by binding and bridging several RNA helices of the 16S rRNA. Forms an intersubunit bridge (bridge B4) with the 23S rRNA of the 50S subunit in the ribosome. The polypeptide is Small ribosomal subunit protein uS15 (Deinococcus geothermalis (strain DSM 11300 / CIP 105573 / AG-3a)).